A 500-amino-acid chain; its full sequence is Glycerol kinase (500 aa).

Position 13 (T13) interacts with ADP. ATP contacts are provided by T13, T14, and S15. Residue T13 participates in sn-glycerol 3-phosphate binding. R17 lines the ADP pocket. R83, E84, Y135, and D244 together coordinate sn-glycerol 3-phosphate. The glycerol site is built by R83, E84, Y135, D244, and Q245. Residues T266 and G309 each contribute to the ADP site. ATP-binding residues include T266, G309, Q313, and G410. ADP-binding residues include G410 and N414.

This sequence belongs to the FGGY kinase family.

It carries out the reaction glycerol + ATP = sn-glycerol 3-phosphate + ADP + H(+). The protein operates within polyol metabolism; glycerol degradation via glycerol kinase pathway; sn-glycerol 3-phosphate from glycerol: step 1/1. With respect to regulation, inhibited by fructose 1,6-bisphosphate (FBP). Key enzyme in the regulation of glycerol uptake and metabolism. Catalyzes the phosphorylation of glycerol to yield sn-glycerol 3-phosphate. In Burkholderia pseudomallei (strain K96243), this protein is Glycerol kinase.